A 212-amino-acid polypeptide reads, in one-letter code: Thymidylate kinase (212 aa).

Residue G7–T14 coordinates ATP.

This sequence belongs to the thymidylate kinase family.

The catalysed reaction is dTMP + ATP = dTDP + ADP. Phosphorylation of dTMP to form dTDP in both de novo and salvage pathways of dTTP synthesis. The chain is Thymidylate kinase from Gloeobacter violaceus (strain ATCC 29082 / PCC 7421).